We begin with the raw amino-acid sequence, 277 residues long: Phosphate import ATP-binding protein PstB 2 (277 aa).

The ABC transporter domain occupies 31–272 (IEVPGLNLFY…PAKKQTEDYI (242 aa)). An ATP-binding site is contributed by 63 to 70 (GPSGCGKS).

It belongs to the ABC transporter superfamily. Phosphate importer (TC 3.A.1.7) family. The complex is composed of two ATP-binding proteins (PstB), two transmembrane proteins (PstC and PstA) and a solute-binding protein (PstS).

It localises to the cell inner membrane. It catalyses the reaction phosphate(out) + ATP + H2O = ADP + 2 phosphate(in) + H(+). Part of the ABC transporter complex PstSACB involved in phosphate import. Responsible for energy coupling to the transport system. In Pseudomonas savastanoi pv. phaseolicola (strain 1448A / Race 6) (Pseudomonas syringae pv. phaseolicola (strain 1448A / Race 6)), this protein is Phosphate import ATP-binding protein PstB 2.